The chain runs to 485 residues: Aspartyl/glutamyl-tRNA(Asn/Gln) amidotransferase subunit B (485 aa).

Belongs to the GatB/GatE family. GatB subfamily. Heterotrimer of A, B and C subunits.

It carries out the reaction L-glutamyl-tRNA(Gln) + L-glutamine + ATP + H2O = L-glutaminyl-tRNA(Gln) + L-glutamate + ADP + phosphate + H(+). The enzyme catalyses L-aspartyl-tRNA(Asn) + L-glutamine + ATP + H2O = L-asparaginyl-tRNA(Asn) + L-glutamate + ADP + phosphate + 2 H(+). In terms of biological role, allows the formation of correctly charged Asn-tRNA(Asn) or Gln-tRNA(Gln) through the transamidation of misacylated Asp-tRNA(Asn) or Glu-tRNA(Gln) in organisms which lack either or both of asparaginyl-tRNA or glutaminyl-tRNA synthetases. The reaction takes place in the presence of glutamine and ATP through an activated phospho-Asp-tRNA(Asn) or phospho-Glu-tRNA(Gln). This Cupriavidus pinatubonensis (strain JMP 134 / LMG 1197) (Cupriavidus necator (strain JMP 134)) protein is Aspartyl/glutamyl-tRNA(Asn/Gln) amidotransferase subunit B.